The primary structure comprises 849 residues: Envelope glycoprotein gp160 (849 aa).

The signal sequence occupies residues 1 to 31; that stretch reads MRVKGIQRNWQHLWKWGTLILGLVIICSASD. Over 32–670 the chain is Extracellular; sequence NLWVTVYYGV…ISNWLWYIRI (639 aa). C53 and C73 are oxidised to a cystine. N-linked (GlcNAc...) asparagine; by host glycans are attached at residues N87, N129, N137, N142, N153, N185, N195, N232, N239, N260, N274, N287, N299, N329, N341, N354, and N358. Disulfide bonds link C118/C203, C125/C194, C130/C154, C216/C245, and C226/C237. Residues 130–153 are V1; sequence CTNVNSANHTEANNTVENKEEIKN. The interval 154-194 is V2; that stretch reads CSFKITTERGGKKKEEYALFYKLDVVPISNGNKTSYRLIHC. The tract at residues 294 to 327 is V3; that stretch reads CIRPNNNTRKSIPIGPGQAFYATGDIIGDIRQAH. A disulfide bridge connects residues C294 and C328. Residues 360–370 form a CD4-binding loop region; it reads SAGGDLEITTH. Disulfide bonds link C374-C430 and C381-C403. The V4 stretch occupies residues 381–403; it reads CNTSGLFNNNISNINNETITLPC. 5 N-linked (GlcNAc...) asparagine; by host glycosylation sites follow: N382, N390, N396, N433, and N447. V5 regions lie at residues 446-457 and 448-457; these read NNDSTEETFRPG and DSTEETFRPG. The interval 498–518 is fusion peptide; sequence AVGLGAVFLGFLGAAGSTMGA. The interval 560–578 is immunosuppression; the sequence is KQLQSRVLAIERYLKDQQL. C584 and C590 are disulfide-bonded. N-linked (GlcNAc...) asparagine; by host glycans are attached at residues N597, N602, N611, and N623. The stretch at 619–653 forms a coiled coil; the sequence is REIHNYTQHIYSLIEESQNQQEKNEQDLLALDKWA. The tract at residues 648–669 is MPER; binding to GalCer; sequence ALDKWASLWNWFDISNWLWYIR. A helical transmembrane segment spans residues 671 to 691; that stretch reads FIMIVGGLIGLRIVFAVLSIV. Topologically, residues 692-849 are cytoplasmic; the sequence is NRVRQGYSPL…IRQGLERALL (158 aa). Positions 698 to 701 match the YXXL motif; contains endocytosis signal motif; it reads YSPL. Residues 709-729 are disordered; sequence HQREPDRLGKTEEGGGEQDRD. Residue C750 is the site of S-palmitoyl cysteine; by host attachment. The short motif at 848–849 is the Di-leucine internalization motif element; the sequence is LL.

This sequence belongs to the HIV-1 env protein family. In terms of assembly, the mature envelope protein (Env) consists of a homotrimer of non-covalently associated gp120-gp41 heterodimers. The resulting complex protrudes from the virus surface as a spike. There seems to be as few as 10 spikes on the average virion. Interacts with host CD4, CCR5 and CXCR4. Gp120 also interacts with the C-type lectins CD209/DC-SIGN and CLEC4M/DC-SIGNR (collectively referred to as DC-SIGN(R)). Gp120 and gp41 interact with GalCer. Gp120 interacts with host ITGA4/ITGB7 complex; on CD4+ T-cells, this interaction results in rapid activation of integrin ITGAL/LFA-1, which facilitates efficient cell-to-cell spreading of HIV-1. Gp120 interacts with cell-associated heparan sulfate; this interaction increases virus infectivity on permissive cells and may be involved in infection of CD4- cells. As to quaternary structure, the mature envelope protein (Env) consists of a homotrimer of non-covalently associated gp120-gp41 heterodimers. The resulting complex protrudes from the virus surface as a spike. There seems to be as few as 10 spikes on the average virion. In terms of processing, highly glycosylated by host. The high number of glycan on the protein is reffered to as 'glycan shield' because it contributes to hide protein sequence from adaptive immune system. Palmitoylation of the transmembrane protein and of Env polyprotein (prior to its proteolytic cleavage) is essential for their association with host cell membrane lipid rafts. Palmitoylation is therefore required for envelope trafficking to classical lipid rafts, but not for viral replication. Post-translationally, specific enzymatic cleavages in vivo yield mature proteins. Envelope glycoproteins are synthesized as an inactive precursor that is heavily N-glycosylated and processed likely by host cell furin in the Golgi to yield the mature SU and TM proteins. The cleavage site between SU and TM requires the minimal sequence [KR]-X-[KR]-R. About 2 of the 9 disulfide bonds of gp41 are reduced by P4HB/PDI, following binding to CD4 receptor.

Its subcellular location is the virion membrane. It localises to the host cell membrane. The protein localises to the host endosome membrane. Functionally, oligomerizes in the host endoplasmic reticulum into predominantly trimers. In a second time, gp160 transits in the host Golgi, where glycosylation is completed. The precursor is then proteolytically cleaved in the trans-Golgi and thereby activated by cellular furin or furin-like proteases to produce gp120 and gp41. In terms of biological role, attaches the virus to the host lymphoid cell by binding to the primary receptor CD4. This interaction induces a structural rearrangement creating a high affinity binding site for a chemokine coreceptor like CXCR4 and/or CCR5. Acts as a ligand for CD209/DC-SIGN and CLEC4M/DC-SIGNR, which are respectively found on dendritic cells (DCs), and on endothelial cells of liver sinusoids and lymph node sinuses. These interactions allow capture of viral particles at mucosal surfaces by these cells and subsequent transmission to permissive cells. HIV subverts the migration properties of dendritic cells to gain access to CD4+ T-cells in lymph nodes. Virus transmission to permissive T-cells occurs either in trans (without DCs infection, through viral capture and transmission), or in cis (following DCs productive infection, through the usual CD4-gp120 interaction), thereby inducing a robust infection. In trans infection, bound virions remain infectious over days and it is proposed that they are not degraded, but protected in non-lysosomal acidic organelles within the DCs close to the cell membrane thus contributing to the viral infectious potential during DCs' migration from the periphery to the lymphoid tissues. On arrival at lymphoid tissues, intact virions recycle back to DCs' cell surface allowing virus transmission to CD4+ T-cells. Its function is as follows. Acts as a class I viral fusion protein. Under the current model, the protein has at least 3 conformational states: pre-fusion native state, pre-hairpin intermediate state, and post-fusion hairpin state. During fusion of viral and target intracellular membranes, the coiled coil regions (heptad repeats) assume a trimer-of-hairpins structure, positioning the fusion peptide in close proximity to the C-terminal region of the ectodomain. The formation of this structure appears to drive apposition and subsequent fusion of viral and target cell membranes. Complete fusion occurs in host cell endosomes and is dynamin-dependent, however some lipid transfer might occur at the plasma membrane. The virus undergoes clathrin-dependent internalization long before endosomal fusion, thus minimizing the surface exposure of conserved viral epitopes during fusion and reducing the efficacy of inhibitors targeting these epitopes. Membranes fusion leads to delivery of the nucleocapsid into the cytoplasm. In Human immunodeficiency virus type 1 group M subtype G (isolate 92NG083) (HIV-1), this protein is Envelope glycoprotein gp160.